Here is a 266-residue protein sequence, read N- to C-terminus: Interleukin-1 beta (266 aa).

Positions 1 to 113 (MATVPEPINE…ETSSDEFLCD (113 aa)) are excised as a propeptide.

It belongs to the IL-1 family. Monomer. In its precursor form, weakly interacts with full-length MEFV; the mature cytokine does not interact at all. Interacts with integrins ITGAV:ITGBV and ITGA5:ITGB1; integrin-binding is required for IL1B signaling. Interacts with cargo receptor TMED10; the interaction is direct and is required for the secretion of IL1B mature form. Interacts with HSP90AB1; the interaction facilitates cargo translocation into the ERGIC. Interacts with HSP90B1; the interaction facilitates cargo translocation into the ERGIC.

It localises to the cytoplasm. It is found in the cytosol. The protein resides in the secreted. Its subcellular location is the lysosome. The protein localises to the extracellular exosome. Its function is as follows. Potent pro-inflammatory cytokine. Initially discovered as the major endogenous pyrogen, induces prostaglandin synthesis, neutrophil influx and activation, T-cell activation and cytokine production, B-cell activation and antibody production, and fibroblast proliferation and collagen production. Promotes Th17 differentiation of T-cells. Synergizes with IL12/interleukin-12 to induce IFNG synthesis from T-helper 1 (Th1) cells. Plays a role in angiogenesis by inducing VEGF production synergistically with TNF and IL6. Involved in transduction of inflammation downstream of pyroptosis: its mature form is specifically released in the extracellular milieu by passing through the gasdermin-D (GSDMD) pore. This chain is Interleukin-1 beta (IL1B), found in Bubalus carabanensis (Swamp type water buffalo).